A 152-amino-acid polypeptide reads, in one-letter code: Ribosomal RNA large subunit methyltransferase H (152 aa).

S-adenosyl-L-methionine is bound by residues Leu-69, Gly-96, and 118-123 (FGKLTF).

The protein belongs to the RNA methyltransferase RlmH family. As to quaternary structure, homodimer.

It is found in the cytoplasm. The catalysed reaction is pseudouridine(1915) in 23S rRNA + S-adenosyl-L-methionine = N(3)-methylpseudouridine(1915) in 23S rRNA + S-adenosyl-L-homocysteine + H(+). Specifically methylates the pseudouridine at position 1915 (m3Psi1915) in 23S rRNA. This Mesomycoplasma hyopneumoniae (strain 232) (Mycoplasma hyopneumoniae) protein is Ribosomal RNA large subunit methyltransferase H.